We begin with the raw amino-acid sequence, 295 residues long: Oxidoreductase AN1597 (295 aa).

This sequence belongs to the asaB hydroxylase/desaturase family.

The protein operates within secondary metabolite biosynthesis; terpenoid biosynthesis. Functionally, oxidoreductase; part of the gene cluster that mediates the biosynthesis of the diterpene ent-pimara-8(14),15-diene (PD). Within the cluster, the HMG-CoA reductase AN1593 functions in the mevalonate pathway, which produces isoprenoid precursors. The geranylgeranyl pyrophosphate (GGPP) synthase AN1592 is needed in the formation of GGPP, the precursor for diterpenes. Lastly, the pimaradiene synthase pbcA performs the 2 cyclization steps that convert GGPP to ent-pimara-8(14),15-diene. The putative roles of the remaining cluster enzymes in ent-pimara-8(14),15-diene biosynthesis is unclear. The cytochrome P450 monooxygenase AN1598, the glutathione S-transferase AN1595, the oxidoreductases AN1596 and AN1597 probably function as decorative enzymes. It is possible that in biological conditions the compound is oxidized to ent-pimara-8(14),15-dien-19-oic acid, which is a bioactive diterpene compound predominant in many plant extracts. This Emericella nidulans (strain FGSC A4 / ATCC 38163 / CBS 112.46 / NRRL 194 / M139) (Aspergillus nidulans) protein is Oxidoreductase AN1597.